The following is a 526-amino-acid chain: Amine oxidase [flavin-containing] A (526 aa).

Met-1 is subject to N-acetylmethionine. Over 1–497 (MTDLEKPSIT…HTFLERNLPS (497 aa)) the chain is Cytoplasmic. Ser-383 is modified (phosphoserine). Cys-406 is subject to S-8alpha-FAD cysteine. A helical; Anchor for type IV membrane protein membrane pass occupies residues 498–518 (VPGLLKITGFSTSVALLCFVL). The Mitochondrial intermembrane segment spans residues 519-526 (YKFKQPQS). Residues 520 to 522 (KFK) form an interaction with membrane phospholipid headgroups region.

It belongs to the flavin monoamine oxidase family. In terms of assembly, monomer, homo- or heterodimer (containing two subunits of similar size). Each subunit contains a covalently bound flavin. Enzymatically active as monomer. The cofactor is FAD.

The protein localises to the mitochondrion outer membrane. It catalyses the reaction a secondary aliphatic amine + O2 + H2O = a primary amine + an aldehyde + H2O2. The catalysed reaction is a primary methyl amine + O2 + H2O = an aldehyde + H2O2 + NH4(+). The enzyme catalyses serotonin + O2 + H2O = (5-hydroxyindol-3-yl)acetaldehyde + H2O2 + NH4(+). It carries out the reaction (R)-adrenaline + O2 + H2O = (R)-3,4-dihydroxymandelaldehyde + methylamine + H2O2. It catalyses the reaction dopamine + O2 + H2O = 3,4-dihydroxyphenylacetaldehyde + H2O2 + NH4(+). The catalysed reaction is tyramine + O2 + H2O = (4-hydroxyphenyl)acetaldehyde + H2O2 + NH4(+). The enzyme catalyses (R)-noradrenaline + O2 + H2O = (R)-3,4-dihydroxymandelaldehyde + H2O2 + NH4(+). It carries out the reaction kynuramine + O2 + H2O = 3-(2-aminophenyl)-3-oxopropanal + H2O2 + NH4(+). It catalyses the reaction tryptamine + O2 + H2O = indole-3-acetaldehyde + H2O2 + NH4(+). The catalysed reaction is 2-phenylethylamine + O2 + H2O = 2-phenylacetaldehyde + H2O2 + NH4(+). Catalyzes the oxidative deamination of biogenic and xenobiotic amines and has important functions in the metabolism of neuroactive and vasoactive amines in the central nervous system and peripheral tissues. Preferentially oxidizes serotonin. Also catalyzes the oxidative deamination of kynuramine to 3-(2-aminophenyl)-3-oxopropanal that can spontaneously condense to 4-hydroxyquinoline. The protein is Amine oxidase [flavin-containing] A of Mus musculus (Mouse).